Here is a 60-residue protein sequence, read N- to C-terminus: Small ribosomal subunit protein uS10 (60 aa).

This sequence belongs to the universal ribosomal protein uS10 family.

The protein is Small ribosomal subunit protein uS10 (RPS20) of Zea mays (Maize).